The following is a 206-amino-acid chain: Large ribosomal subunit protein uL4 (206 aa).

A disordered region spans residues methionine 63 to histidine 96. The span at tyrosine 64 to alanine 77 shows a compositional bias: basic residues.

The protein belongs to the universal ribosomal protein uL4 family. In terms of assembly, part of the 50S ribosomal subunit.

In terms of biological role, one of the primary rRNA binding proteins, this protein initially binds near the 5'-end of the 23S rRNA. It is important during the early stages of 50S assembly. It makes multiple contacts with different domains of the 23S rRNA in the assembled 50S subunit and ribosome. Its function is as follows. Forms part of the polypeptide exit tunnel. The polypeptide is Large ribosomal subunit protein uL4 (Allorhizobium ampelinum (strain ATCC BAA-846 / DSM 112012 / S4) (Agrobacterium vitis (strain S4))).